The following is a 518-amino-acid chain: METDEAQDMSQVSGKESPPISDVPDDADEPMPVPEDLSTTTGGQQSVKNERVLAGNIKIETQSDEENGRACEMNGEECAEDLRMLDASGDKMNGSHNGPGSKAMSGVGGIRLPNGKLKCDICGIICIGPNVLMVHNRSHTGERPFQCNQCGASFTQKGNLLRHIKLHSGEKPFKCHLCNYACRRRDALTGHLRTHSVGKPHKCGYCGRSYKQRSSLEEHKERCHNYLQTMSISSNLYSVIKEETNQSEMAEDLCKIGSERSLVLDRLASNVAKRKSSMPQKFVGEKCLSDLPYDATTNYEKENEIMQTHVIDQAINNAISYLGAESLRPLVQTPPVGSEVVPVISPMYQLHKPLGDNQTRSNHTAQDSAVENLLLLSKAKSVSSERDASPSNSCQDSTDTESNNEERSGLIYLTNHIGPHARNGISVKEESRQFDVLRAGTDNSQDAFKVISSNGEQVRVYKCEHCRVLFLDHVMYTIHMGCHGFRDPFECNMCGYHSQDRYEFSSHITRGEHRFHMS.

The interval Met-1 to Arg-51 is disordered. Positions Leu-37–Val-47 are enriched in polar residues. 4 C2H2-type zinc fingers span residues Leu-117–His-139, Phe-145–His-167, Phe-173–His-195, and His-201–His-224. The segment at Ser-381 to Glu-405 is disordered. C2H2-type zinc fingers lie at residues Tyr-461–His-483 and Phe-489–His-513.

The protein belongs to the Ikaros C2H2-type zinc-finger protein family. As to expression, expressed in embryonic hematopoietic organs such as the bursa of Fabricius, thymus and spleen. In the adult, expressed in spleen, thymus, bursa and peripheral blood leukocytes.

The protein resides in the nucleus. Functionally, binds and activates the enhancer (delta-A element) of the CD3-delta gene. Functions in the specification and the maturation of the T-lymphocyte. Also interacts with a critical control element in the TDT (terminal deoxynucleotidyltransferase) promoter as well as with the promoters for other genes expressed during early stages of B- and T-cell development. Function is isoform-specific and is modulated by dominant-negative inactive isoforms. This Gallus gallus (Chicken) protein is DNA-binding protein Ikaros (IKZF1).